Here is a 664-residue protein sequence, read N- to C-terminus: Protein LYK5 (664 aa).

The signal sequence occupies residues 1 to 26 (MAACTLHALSVTLFLLLFFAVSPAKA). At 27–277 (QQPYVNNHQL…DPPGSSSSHK (251 aa)) the chain is on the extracellular side. N-linked (GlcNAc...) asparagine glycans are attached at residues Asn-45, Asn-81, Asn-111, Asn-125, and Asn-129. Cystine bridges form between Cys-52–Cys-114, Cys-58–Cys-181, and Cys-112–Cys-179. Chitin is bound at residue 135–141 (GDETYFS). N-linked (GlcNAc...) asparagine glycosylation is present at Asn-144. 164-170 (ERQLTPG) serves as a coordination point for chitin. A LysM domain is found at 195–238 (LTYLVAMGDSISGIAEMFNSTSAAITEGNELTSDNIFFFTPVLV). A glycan (N-linked (GlcNAc...) asparagine) is linked at Asn-213. The segment covering 251–269 (PSPPPPPVVATPPQTPVDP) has biased composition (pro residues). The tract at residues 251–270 (PSPPPPPVVATPPQTPVDPP) is disordered. A helical transmembrane segment spans residues 278-298 (WIYIGIGIGAGLLLLLSILAL). Topologically, residues 299 to 664 (CFYKRRSKKK…DLLRSGSLGN (366 aa)) are cytoplasmic. The Protein kinase domain maps to 351–643 (KSAIESLTLY…TQVLTTLSMI (293 aa)). Residues 357 to 365 (LTLYRFNDL) and Lys-395 contribute to the ATP site.

This sequence belongs to the protein kinase superfamily. Ser/Thr protein kinase family.

It is found in the cell membrane. In terms of biological role, may recognize microbe-derived N-acetylglucosamine (NAG)-containing ligands. The protein is Protein LYK5 (LYK5) of Arabidopsis thaliana (Mouse-ear cress).